The following is a 283-amino-acid chain: Pantothenate synthetase (283 aa).

30-37 contacts ATP; sequence MGALHEGH. H37 serves as the catalytic Proton donor. Position 61 (Q61) interacts with (R)-pantoate. A beta-alanine-binding site is contributed by Q61. 147–150 contacts ATP; that stretch reads GEKD. Q153 lines the (R)-pantoate pocket. ATP contacts are provided by residues I176 and 184 to 187; that span reads VSSR.

Belongs to the pantothenate synthetase family. In terms of assembly, homodimer.

The protein localises to the cytoplasm. The catalysed reaction is (R)-pantoate + beta-alanine + ATP = (R)-pantothenate + AMP + diphosphate + H(+). It functions in the pathway cofactor biosynthesis; (R)-pantothenate biosynthesis; (R)-pantothenate from (R)-pantoate and beta-alanine: step 1/1. Functionally, catalyzes the condensation of pantoate with beta-alanine in an ATP-dependent reaction via a pantoyl-adenylate intermediate. This Chlorobium phaeobacteroides (strain DSM 266 / SMG 266 / 2430) protein is Pantothenate synthetase.